Here is a 210-residue protein sequence, read N- to C-terminus: MDFYYLPLSAPCRSVLMTAKALGIELNKKLLKLFEGGHLKPEFLKINPQHTIPTLVDNGFALWESRAIMVYLVEKYGKQDDPLYPSCPKKRALINQRLYFDMGTLYQGFANYFYPQFKEKKPADPELFKKFEVTLDFLNTFLSESKYAAGDSLTLADLALLASVSTFEAVNIDVSKYEHIARWYALVKETAPGADENWAGALEMKTLIPK.

The 80-residue stretch at 1–80 (MDFYYLPLSA…YLVEKYGKQD (80 aa)) folds into the GST N-terminal domain. Glutathione is bound by residues serine 9, 50-52 (HTI), and 64-66 (ESR). The GST C-terminal domain maps to 87-208 (CPKKRALINQ…AGALEMKTLI (122 aa)).

This sequence belongs to the GST superfamily. Theta family. In terms of assembly, homodimer.

It carries out the reaction RX + glutathione = an S-substituted glutathione + a halide anion + H(+). Functionally, conjugation of reduced glutathione to a wide number of exogenous and endogenous hydrophobic electrophiles. This chain is Glutathione S-transferase 4 (Gst4), found in Musca domestica (House fly).